A 110-amino-acid chain; its full sequence is Phosphoribosyl-ATP pyrophosphatase (110 aa).

Belongs to the PRA-PH family.

The protein localises to the cytoplasm. The enzyme catalyses 1-(5-phospho-beta-D-ribosyl)-ATP + H2O = 1-(5-phospho-beta-D-ribosyl)-5'-AMP + diphosphate + H(+). Its pathway is amino-acid biosynthesis; L-histidine biosynthesis; L-histidine from 5-phospho-alpha-D-ribose 1-diphosphate: step 2/9. The chain is Phosphoribosyl-ATP pyrophosphatase from Stutzerimonas stutzeri (strain A1501) (Pseudomonas stutzeri).